The sequence spans 290 residues: Arginine N-acetyltransferase avaD (290 aa).

An acetyl-CoA-binding site is contributed by 157–163 (NQAHFEA).

This sequence belongs to the acetyltransferase family. GCN5 subfamily.

It functions in the pathway secondary metabolite metabolism. In terms of biological role, arginine N-acetyltransferase; part of the cluster that mediates the biosynthesis of a highly modified cyclo-arginine-tryptophan dipeptide (cRW). Within the pathway, avaD catalyzes the N-acetylation of the guanidine group. The first step of the pathway is perfornmed by the arginine-containing cyclodipeptide synthase (RCPDS) avaA that acts as the scaffold-generating enzyme and is responsible for formation of the cyclo-Arg-Trp (cRW) diketopiperazine. AvaB then acts as a multifunctional flavoenzyme that is responsible for generating the cyclo-Arg-formylkynurenine DKP, which can be deformylated by avaC. AvaB then further catalyzes an additional N-oxidation followed by cyclization and dehydration. The next step is an N-acetylation of the guanidine group catalyzed by the arginine N-acetyltransferase avaD. The roles of the additional enzymes identified within the ava cluster still have to be determined. This chain is Arginine N-acetyltransferase avaD, found in Aspergillus versicolor.